Reading from the N-terminus, the 301-residue chain is Homeobox protein Nkx-2.6 (301 aa).

A disordered region spans residues 22–135; the sequence is ERSCPAASPH…QPKARQRRKP (114 aa). A DNA-binding region (homeobox) is located at residues 132–191; sequence RRKPRVLFSQAQVLALERRFKQQRYLSAPEREHLASALQLTSTQVKIWFQNRRYKCKRQR.

It belongs to the NK-2 homeobox family.

It localises to the nucleus. Functionally, acts as a transcriptional activator. In conjunction with NKX2-5, may play a role in both pharyngeal and cardiac embryonic development. This chain is Homeobox protein Nkx-2.6 (NKX2-6), found in Homo sapiens (Human).